The sequence spans 649 residues: MAIVALGVVYGDIGTSPLYTMQTFLNGQGGLAHTDRAAVLGILSLVFWSITLITTVKYVFIAMRIDNNGEGGIFALYSLIRKYGAWLAIPAMLGGAAFLADSVLTPAVSISSAVEGLETLPLLEPIMSGNKELTLMITIVIIVCLFAVQSRGTERIGRTFGTVVMIWFSFLAVVGLVNLSSDWSVLEALNPVYGVEFLFSHHNAAGLAVMGTVFLSTTGAEALYSDMGHVGRGNIYFTWPFIKIALVFCYFGQGAWMLNHWDDTAYNHMHGLNPFFEMMTPSVRYVAVLLSVCAGVIASQALITGAYTMVSEATRLNWMPHLQVRYPARTRGQLYIPVVNAVLCVSTLLVLAMFRDSEHISAAYGLALTVTMITTTILLAVYIWHDGKRVGAVVFTVVFLAIQFLFFFASMAKFLHGGWFTMLLTLAILLIMYTWNEGTKLERAQRRHMQPADCVPVLKRLHEDDSIPYFADNIVYLTSDPEMKRVDTDIFFSIFADHPKRARAWWAVSVETSDNPFTREYSVENFGTDFLFRVRIRLGFKVSQSIPAYIHQIMNDLSKSGDLPKQTTRYPKLDADPNIGPIRYVLIHKALMPESKVSQKGAISLQIKYAIRHLAGSPVKWFGLAPYNPLIEIQPLFLATERPPRLKRV.

12 helical membrane-spanning segments follow: residues 1–21, 42–62, 84–104, 126–146, 159–179, 195–215, 235–255, 286–306, 334–354, 364–384, 390–410, and 414–434; these read MAIV…LYTM, ILSL…VFIA, GAWL…DSVL, IMSG…VCLF, TFGT…LVNL, VEFL…TVFL, IYFT…GQGA, VAVL…ITGA, LYIP…LAMF, YGLA…VYIW, VGAV…FFAS, and FLHG…IMYT.

This sequence belongs to the HAK/KUP transporter (TC 2.A.72) family.

The protein localises to the cell membrane. The catalysed reaction is K(+)(in) + H(+)(in) = K(+)(out) + H(+)(out). Functionally, transport of potassium into the cell. Likely operates as a K(+):H(+) symporter. In Bifidobacterium adolescentis (strain ATCC 15703 / DSM 20083 / NCTC 11814 / E194a), this protein is Probable potassium transport system protein Kup.